A 323-amino-acid chain; its full sequence is Leukocyte surface antigen CD47 (323 aa).

A signal peptide spans 1-18; the sequence is MWPLVAALLLGSACCGSA. Glutamine 19 carries the pyrrolidone carboxylic acid modification. Residues 19 to 127 enclose the Ig-like V-type domain; the sequence is QLLFNKTKSV…ELTREGETII (109 aa). Residues 19-141 are Extracellular-facing; the sequence is QLLFNKTKSV…RVVSWFSPNE (123 aa). N-linked (GlcNAc...) asparagine glycosylation is found at asparagine 23, asparagine 34, asparagine 50, and asparagine 73. 2 disulfides stabilise this stretch: cysteine 33–cysteine 263 and cysteine 41–cysteine 114. A Phosphoserine modification is found at serine 89. A glycan (N-linked (GlcNAc...) asparagine) is linked at asparagine 111. The helical transmembrane segment at 142-162 threads the bilayer; sequence NILIVIFPIFAILLFWGQFGI. Residues 163 to 176 lie on the Cytoplasmic side of the membrane; that stretch reads KTLKYRSGGMDEKT. Residues 177–197 traverse the membrane as a helical segment; the sequence is IALLVAGLVITVIVIVGAILF. At 198–207 the chain is on the extracellular side; sequence VPGEYSLKNA. An N-linked (GlcNAc...) asparagine glycan is attached at asparagine 206. The chain crosses the membrane as a helical span at residues 208–228; that stretch reads TGLGLIVTSTGILILLHYYVF. Topologically, residues 229–235 are cytoplasmic; that stretch reads STAIGLT. A helical transmembrane segment spans residues 236-256; it reads SFVIAILVIQVIAYILAVVGL. Topologically, residues 257–268 are extracellular; that stretch reads SLCIAACIPMHG. The chain crosses the membrane as a helical span at residues 269 to 289; that stretch reads PLLISGLSILALAQLLGLVYM. At 290-323 the chain is on the cytoplasmic side; sequence KFVASNQKTIQPPRKAVEEPLNAFKESKGMMNDE.

In terms of assembly, monomer. Interacts with THBS1 (via the C-terminal domain). Interacts with SIRPA. Interacts with FAS/CD95; interaction may be enhanced by functional activation. Interacts with SIRPG, UBQLN1 and UBQLN2. May interact with fibrinogen. Interacts with Aedes aegypti neutrophil-stimulating factor 1; the interaction results in inhibition of phagocytosis activity of macrophages. As to expression, very broadly distributed on normal adult tissues, as well as ovarian tumors, being especially abundant in some epithelia and the brain. Macrophages.

Its subcellular location is the cell membrane. In terms of biological role, adhesive protein that mediates cell-to-cell interactions. Acts as a receptor for thrombospondin THBS1 and as modulator of integrin signaling through the activation of heterotrimeric G proteins. Involved in signal transduction, cardiovascular homeostasis, inflammation, apoptosis, angiogenesis, cellular self-renewal, and immunoregulation. Plays a role in modulating pulmonary endothelin EDN1 signaling. Modulates nitrous oxide (NO) signaling, in response to THBS1, hence playing a role as a pressor agent, supporting blood pressure. Plays an important role in memory formation and synaptic plasticity in the hippocampus. Receptor for SIRPA, binding to which prevents maturation of immature dendritic cells and inhibits cytokine production by mature dendritic cells. Interaction with SIRPG mediates cell-cell adhesion, enhances superantigen-dependent T-cell-mediated proliferation and costimulates T-cell activation. Positively modulates FAS-dependent apoptosis in T-cells, perhaps by enhancing FAS clustering. Plays a role in suppressing angiogenesis and may be involved in metabolic dysregulation during normal aging. In response to THBS1, negatively modulates wound healing. Inhibits stem cell self-renewal, in response to THBS1, probably by regulation of the stem cell transcription factors POU5F1/OCT4, SOX2, MYC/c-Myc and KLF4. May play a role in membrane transport and/or integrin dependent signal transduction. May prevent premature elimination of red blood cells. In Homo sapiens (Human), this protein is Leukocyte surface antigen CD47 (CD47).